A 483-amino-acid polypeptide reads, in one-letter code: Acyl-coenzyme A thioesterase 2, mitochondrial (483 aa).

An N6-acetyllysine modification is found at K104. Residues S294, D388, and H422 each act as charge relay system in the active site. K470 bears the N6-succinyllysine mark. The Microbody targeting signal motif lies at 481–483; the sequence is SKV.

Belongs to the C/M/P thioester hydrolase family. Monomer. Strongest expression in heart, liver, muscle and kidney. Weak in placenta and pancreas.

Its subcellular location is the mitochondrion. The catalysed reaction is hexadecanoyl-CoA + H2O = hexadecanoate + CoA + H(+). It catalyses the reaction tetradecanoyl-CoA + H2O = tetradecanoate + CoA + H(+). It carries out the reaction octadecanoyl-CoA + H2O = octadecanoate + CoA + H(+). The enzyme catalyses eicosanoyl-CoA + H2O = eicosanoate + CoA + H(+). The catalysed reaction is decanoyl-CoA + H2O = decanoate + CoA + H(+). It catalyses the reaction dodecanoyl-CoA + H2O = dodecanoate + CoA + H(+). It carries out the reaction (9Z)-octadecenoyl-CoA + H2O = (9Z)-octadecenoate + CoA + H(+). The enzyme catalyses (9Z)-hexadecenoyl-CoA + H2O = (9Z)-hexadecenoate + CoA + H(+). The catalysed reaction is (9E)-octadecenoyl-CoA + H2O = (9E)-octadecenoate + CoA + H(+). It catalyses the reaction (9Z,12Z)-octadecadienoyl-CoA + H2O = (9Z,12Z)-octadecadienoate + CoA + H(+). The protein operates within lipid metabolism; fatty acid metabolism. Catalyzes the hydrolysis of acyl-CoAs into free fatty acids and coenzyme A (CoASH), regulating their respective intracellular levels. Displays higher activity toward long chain acyl CoAs (C14-C20). The enzyme is involved in enhancing the hepatic fatty acid oxidation in mitochondria. The polypeptide is Acyl-coenzyme A thioesterase 2, mitochondrial (ACOT2) (Homo sapiens (Human)).